A 181-amino-acid chain; its full sequence is Adenine phosphoribosyltransferase (181 aa).

Belongs to the purine/pyrimidine phosphoribosyltransferase family. Homodimer.

The protein localises to the cytoplasm. It catalyses the reaction AMP + diphosphate = 5-phospho-alpha-D-ribose 1-diphosphate + adenine. Its pathway is purine metabolism; AMP biosynthesis via salvage pathway; AMP from adenine: step 1/1. Its function is as follows. Catalyzes a salvage reaction resulting in the formation of AMP, that is energically less costly than de novo synthesis. This chain is Adenine phosphoribosyltransferase, found in Methylobacterium radiotolerans (strain ATCC 27329 / DSM 1819 / JCM 2831 / NBRC 15690 / NCIMB 10815 / 0-1).